The primary structure comprises 338 residues: Solute carrier family 35 member G5 (338 aa).

The disordered stretch occupies residues 1-21 (MAGSHPYFNLPDSTHPSPPSA). Helical transmembrane passes span 37-57 (TNGL…VGPL), 67-87 (LPSL…ALPL), 105-125 (CFCA…VQVV), 160-180 (CGLL…LWTL), 190-210 (ALGY…LLVY), 221-241 (TVAF…LFVL), 250-270 (LLSW…FTCV), 281-301 (LVCA…YYVL), and 305-325 (VAPF…IITA). Residues 49-174 (LPAGFVGPLS…SILGLIIIVG (126 aa)) form the EamA 1 domain. The EamA 2 domain maps to 272–325 (YAVTKAHPALVCAVLHSEVVVALILQYYVLHETVAPFDITGAGIVLGSIAIITA).

This sequence belongs to the SLC35G solute transporter family.

The protein resides in the membrane. The polypeptide is Solute carrier family 35 member G5 (SLC35G5) (Pan paniscus (Pygmy chimpanzee)).